The sequence spans 431 residues: Serine--tRNA ligase (431 aa).

235 to 237 (TAE) is an L-serine binding site. ATP-binding positions include 266 to 268 (RRE) and Val282. An L-serine-binding site is contributed by Glu289. 353–356 (EASS) contacts ATP. Ser389 contacts L-serine.

The protein belongs to the class-II aminoacyl-tRNA synthetase family. Type-1 seryl-tRNA synthetase subfamily. In terms of assembly, homodimer. The tRNA molecule binds across the dimer.

The protein resides in the cytoplasm. The enzyme catalyses tRNA(Ser) + L-serine + ATP = L-seryl-tRNA(Ser) + AMP + diphosphate + H(+). The catalysed reaction is tRNA(Sec) + L-serine + ATP = L-seryl-tRNA(Sec) + AMP + diphosphate + H(+). Its pathway is aminoacyl-tRNA biosynthesis; selenocysteinyl-tRNA(Sec) biosynthesis; L-seryl-tRNA(Sec) from L-serine and tRNA(Sec): step 1/1. Functionally, catalyzes the attachment of serine to tRNA(Ser). Is also able to aminoacylate tRNA(Sec) with serine, to form the misacylated tRNA L-seryl-tRNA(Sec), which will be further converted into selenocysteinyl-tRNA(Sec). This Chlorobium phaeobacteroides (strain DSM 266 / SMG 266 / 2430) protein is Serine--tRNA ligase.